Consider the following 654-residue polypeptide: Glycogen debranching enzyme (654 aa).

Asp-336 functions as the Nucleophile in the catalytic mechanism. Residue Glu-371 is the Proton donor of the active site. The segment at 459–484 (EANGEENRDGTNSNYSDNHGKEGLGG) is disordered.

The protein belongs to the glycosyl hydrolase 13 family.

It carries out the reaction Hydrolysis of (1-&gt;6)-alpha-D-glucosidic linkages to branches with degrees of polymerization of three or four glucose residues in limit dextrin.. Its pathway is glycan degradation; glycogen degradation. In terms of biological role, removes maltotriose and maltotetraose chains that are attached by 1,6-alpha-linkage to the limit dextrin main chain, generating a debranched limit dextrin. The chain is Glycogen debranching enzyme from Salmonella typhi.